Consider the following 625-residue polypeptide: tRNA uridine 5-carboxymethylaminomethyl modification enzyme MnmG (625 aa).

An FAD-binding site is contributed by 14–19 (GAGHAG). Residue 273-287 (GPRYCPSIEDKIVRF) participates in NAD(+) binding.

This sequence belongs to the MnmG family. Homodimer. Heterotetramer of two MnmE and two MnmG subunits. Requires FAD as cofactor.

The protein resides in the cytoplasm. NAD-binding protein involved in the addition of a carboxymethylaminomethyl (cmnm) group at the wobble position (U34) of certain tRNAs, forming tRNA-cmnm(5)s(2)U34. The sequence is that of tRNA uridine 5-carboxymethylaminomethyl modification enzyme MnmG from Clostridium botulinum (strain Hall / ATCC 3502 / NCTC 13319 / Type A).